A 498-amino-acid polypeptide reads, in one-letter code: Glutamate--tRNA ligase (498 aa).

The 'HIGH' region motif lies at Pro11 to Asn21. The short motif at Lys260–Arg264 is the 'KMSKS' region element. An ATP-binding site is contributed by Lys263.

This sequence belongs to the class-I aminoacyl-tRNA synthetase family. Glutamate--tRNA ligase type 1 subfamily. As to quaternary structure, monomer.

It localises to the cytoplasm. The catalysed reaction is tRNA(Glu) + L-glutamate + ATP = L-glutamyl-tRNA(Glu) + AMP + diphosphate. In terms of biological role, catalyzes the attachment of glutamate to tRNA(Glu) in a two-step reaction: glutamate is first activated by ATP to form Glu-AMP and then transferred to the acceptor end of tRNA(Glu). This Leuconostoc mesenteroides subsp. mesenteroides (strain ATCC 8293 / DSM 20343 / BCRC 11652 / CCM 1803 / JCM 6124 / NCDO 523 / NBRC 100496 / NCIMB 8023 / NCTC 12954 / NRRL B-1118 / 37Y) protein is Glutamate--tRNA ligase.